Consider the following 113-residue polypeptide: Putative pterin-4-alpha-carbinolamine dehydratase (113 aa).

Belongs to the pterin-4-alpha-carbinolamine dehydratase family.

It carries out the reaction (4aS,6R)-4a-hydroxy-L-erythro-5,6,7,8-tetrahydrobiopterin = (6R)-L-erythro-6,7-dihydrobiopterin + H2O. This Rickettsia bellii (strain OSU 85-389) protein is Putative pterin-4-alpha-carbinolamine dehydratase.